The chain runs to 309 residues: Putative G-protein coupled receptor B0244.4 (309 aa).

6 consecutive transmembrane segments (helical) span residues serine 39 to leucine 59, tyrosine 82 to leucine 102, isoleucine 114 to valine 134, phenylalanine 162 to alanine 182, isoleucine 204 to leucine 224, and tryptophan 256 to valine 276.

The protein belongs to the G-protein coupled receptor 1 family. B0244 subfamily.

The protein resides in the cell membrane. This is Putative G-protein coupled receptor B0244.4 from Caenorhabditis elegans.